The primary structure comprises 467 residues: Chromosomal replication initiator protein DnaA (467 aa).

The interval 1-90 (MSLSLWQQCL…KPVTQTPQAA (90 aa)) is domain I, interacts with DnaA modulators. Residues 91-130 (VTSNVAAPALVAQTQPQRAAPSTRSGWDNVPAPAEPTYRS) are domain II. A domain III, AAA+ region region spans residues 131-347 (NVNVKHTFDN…GALNRVIANA (217 aa)). 4 residues coordinate ATP: Gly175, Gly177, Lys178, and Thr179. Positions 348-467 (NFTGRAITID…FSNLIRTLSS (120 aa)) are domain IV, binds dsDNA.

Belongs to the DnaA family. In terms of assembly, oligomerizes as a right-handed, spiral filament on DNA at oriC.

The protein resides in the cytoplasm. Its function is as follows. Plays an essential role in the initiation and regulation of chromosomal replication. ATP-DnaA binds to the origin of replication (oriC) to initiate formation of the DNA replication initiation complex once per cell cycle. Binds the DnaA box (a 9 base pair repeat at the origin) and separates the double-stranded (ds)DNA. Forms a right-handed helical filament on oriC DNA; dsDNA binds to the exterior of the filament while single-stranded (ss)DNA is stabiized in the filament's interior. The ATP-DnaA-oriC complex binds and stabilizes one strand of the AT-rich DNA unwinding element (DUE), permitting loading of DNA polymerase. After initiation quickly degrades to an ADP-DnaA complex that is not apt for DNA replication. Binds acidic phospholipids. This Shigella dysenteriae serotype 1 (strain Sd197) protein is Chromosomal replication initiator protein DnaA.